Here is a 475-residue protein sequence, read N- to C-terminus: Ribulose bisphosphate carboxylase large chain (475 aa).

Residues 1-2 (MS) constitute a propeptide that is removed on maturation. At Pro-3 the chain carries N-acetylproline. Lys-14 bears the N6,N6,N6-trimethyllysine mark. The substrate site is built by Asn-123 and Thr-173. Catalysis depends on Lys-175, which acts as the Proton acceptor. Lys-177 contacts substrate. Mg(2+) is bound by residues Lys-201, Asp-203, and Glu-204. At Lys-201 the chain carries N6-carboxylysine. His-294 acts as the Proton acceptor in catalysis. Residues Arg-295, His-327, and Ser-379 each coordinate substrate.

It belongs to the RuBisCO large chain family. Type I subfamily. Heterohexadecamer of 8 large chains and 8 small chains; disulfide-linked. The disulfide link is formed within the large subunit homodimers. It depends on Mg(2+) as a cofactor. Post-translationally, the disulfide bond which can form in the large chain dimeric partners within the hexadecamer appears to be associated with oxidative stress and protein turnover.

The protein localises to the plastid. It is found in the chloroplast. The catalysed reaction is 2 (2R)-3-phosphoglycerate + 2 H(+) = D-ribulose 1,5-bisphosphate + CO2 + H2O. The enzyme catalyses D-ribulose 1,5-bisphosphate + O2 = 2-phosphoglycolate + (2R)-3-phosphoglycerate + 2 H(+). Functionally, ruBisCO catalyzes two reactions: the carboxylation of D-ribulose 1,5-bisphosphate, the primary event in carbon dioxide fixation, as well as the oxidative fragmentation of the pentose substrate in the photorespiration process. Both reactions occur simultaneously and in competition at the same active site. The polypeptide is Ribulose bisphosphate carboxylase large chain (Adiantum capillus-veneris (Maidenhair fern)).